Reading from the N-terminus, the 791-residue chain is Splicing factor 3A subunit 1 (791 aa).

Residues 1–41 (MQAGPVQAVPPPPPVATESKQPIEEEASSKEDPTPSKPVVG) form a disordered region. A Glycyl lysine isopeptide (Lys-Gly) (interchain with G-Cter in SUMO2) cross-link involves residue K20. Positions 21-34 (QPIEEEASSKEDPT) are enriched in basic and acidic residues. The SURP motif 1 repeat unit spans residues 52–94 (IVDKTASFVARNGPEFEARIRQNEINNPKFNFLNPNDPYHAYY). K55 carries the N6-acetyllysine modification. A Glycyl lysine isopeptide (Lys-Gly) (interchain with G-Cter in SUMO2) cross-link involves residue K131. An SURP motif 2 repeat occupies 166 to 208 (VVKLTAQFVARNGRQFLTQLMQKEQRNYQFDFLRPQHSLFNYF). Positions 318 to 411 (GESEEVEMEV…APAPDEYLVS (94 aa)) are disordered. Residues S320 and S329 each carry the phosphoserine modification. Over residues 320–336 (SEEVEMEVESDEEDQEK) the composition is skewed to acidic residues. Residues 340–351 (TPSQLDQDTQVQ) show a composition bias toward polar residues. Residues 352-362 (DMDEGSDDEEE) show a composition bias toward acidic residues. S357 carries the phosphoserine modification. Pro residues predominate over residues 366–382 (VPPPPETPMPPPLPPTP). Residues 386-395 (IVRKDYDPKA) show a composition bias toward basic and acidic residues. The residue at position 411 (S411) is a Phosphoserine. K422 is covalently cross-linked (Glycyl lysine isopeptide (Lys-Gly) (interchain with G-Cter in SUMO2)). S449 is modified (phosphoserine). Position 454 is a phosphotyrosine (Y454). Basic and acidic residues predominate over residues 486 to 500 (IGEEEIQKPEEKVTW). 3 disordered regions span residues 486-516 (IGEEEIQKPEEKVTWDGHSGSMARTQQAAQA), 528-582 (HKAK…AMPP), and 664-684 (PMPPVHPPPPMEDEPPSKKLK). A Glycyl lysine isopeptide (Lys-Gly) (interchain with G-Cter in SUMO2) cross-link involves residue K497. Position 506 is a phosphoserine (S506). Over residues 507-516 (MARTQQAAQA) the composition is skewed to polar residues. K540 is covalently cross-linked (Glycyl lysine isopeptide (Lys-Gly) (interchain with G-Cter in SUMO2)). Polar residues predominate over residues 561–570 (ATNIPSSAPP). The segment covering 664–673 (PMPPVHPPPP) has biased composition (pro residues). Residues 678-700 (PPSKKLKTEDSLMPEEEFLRRNK) form a required and sufficient for nuclear import region. Residue K684 forms a Glycyl lysine isopeptide (Lys-Gly) (interchain with G-Cter in SUMO2) linkage. A Ubiquitin-like domain is found at 705–788 (IKVQVPNMQD…IHLALKERGG (84 aa)). Phosphotyrosine is present on Y757.

Component of the 17S U2 SnRNP complex, a ribonucleoprotein complex that contains small nuclear RNA (snRNA) U2 and a number of specific proteins. Part of the SF3A subcomplex of the 17S U2 SnRNP complex which is composed of three subunits; SF3A3/SAP61, SF3A2/SAP62 and SF3A1/SAP114. SF3A associates with the splicing factor SF3B and a 12S RNA unit to form the mature 17S U2 small nuclear ribonucleoprotein complex (17S U2 snRNP). SF3A1 functions as a scaffold that interacts directly with both SF3A2 and SF3A3. Identified in the spliceosome 'E' complex, a precursor of the spliceosome 'A' complex. Identified in the spliceosome 'A' and 'B' complexes. Identified in the spliceosome 'C' complex. Interacts with P2RX6; resulting in a reduction of the splicing activity.

It is found in the nucleus. The protein resides in the nucleus speckle. Component of the 17S U2 SnRNP complex of the spliceosome, a large ribonucleoprotein complex that removes introns from transcribed pre-mRNAs. The 17S U2 SnRNP complex (1) directly participates in early spliceosome assembly and (2) mediates recognition of the intron branch site during pre-mRNA splicing by promoting the selection of the pre-mRNA branch-site adenosine, the nucleophile for the first step of splicing. Within the 17S U2 SnRNP complex, SF3A1 is part of the SF3A subcomplex that contributes to the assembly of the 17S U2 snRNP, and the subsequent assembly of the pre-spliceosome 'E' complex and the pre-catalytic spliceosome 'A' complex. Involved in pre-mRNA splicing as a component of pre-catalytic spliceosome 'B' complexes. The polypeptide is Splicing factor 3A subunit 1 (Sf3a1) (Mus musculus (Mouse)).